The following is an 845-amino-acid chain: uncharacterized protein (845 aa).

Disordered regions lie at residues 17-37 (RRKQDALHSPSLNMDKKNDQP) and 550-573 (AATEAEVEDQNSERNDDNALNESL). Positions 622 to 707 (LSEQRFEREN…ELKKSNEHTR (86 aa)) form a coiled coil.

This is an uncharacterized protein from Saccharum officinarum (Sugarcane).